Consider the following 287-residue polypeptide: 4-hydroxybenzoate octaprenyltransferase (287 aa).

9 consecutive transmembrane segments (helical) span residues 22-42 (IGTY…SDGW), 45-65 (LQLL…GCVI), 95-115 (AINL…MLSW), 116-136 (STIY…FMKR), 140-160 (LPQL…FSEA), 162-182 (GEIP…TIAY), 214-234 (IGFL…ILAF), 237-257 (PYQL…LLIV), and 264-284 (CFQA…GIAI).

The protein belongs to the UbiA prenyltransferase family. The cofactor is Mg(2+).

The protein resides in the cell inner membrane. The enzyme catalyses all-trans-octaprenyl diphosphate + 4-hydroxybenzoate = 4-hydroxy-3-(all-trans-octaprenyl)benzoate + diphosphate. The protein operates within cofactor biosynthesis; ubiquinone biosynthesis. In terms of biological role, catalyzes the prenylation of para-hydroxybenzoate (PHB) with an all-trans polyprenyl group. Mediates the second step in the final reaction sequence of ubiquinone-8 (UQ-8) biosynthesis, which is the condensation of the polyisoprenoid side chain with PHB, generating the first membrane-bound Q intermediate 3-octaprenyl-4-hydroxybenzoate. This is 4-hydroxybenzoate octaprenyltransferase from Colwellia psychrerythraea (strain 34H / ATCC BAA-681) (Vibrio psychroerythus).